We begin with the raw amino-acid sequence, 31 residues long: Cytochrome b6-f complex subunit 6 (31 aa).

The helical transmembrane segment at 7–25 threads the bilayer; that stretch reads YSGFLLAAPIPASAPFTGL.

Belongs to the PetL family. The 4 large subunits of the cytochrome b6-f complex are cytochrome b6, subunit IV (17 kDa polypeptide, PetD), cytochrome f and the Rieske protein, while the 4 small subunits are PetG, PetL, PetM and PetN. The complex functions as a dimer.

The protein localises to the plastid. It localises to the chloroplast thylakoid membrane. Its function is as follows. Component of the cytochrome b6-f complex, which mediates electron transfer between photosystem II (PSII) and photosystem I (PSI), cyclic electron flow around PSI, and state transitions. PetL is important for photoautotrophic growth as well as for electron transfer efficiency and stability of the cytochrome b6-f complex. The protein is Cytochrome b6-f complex subunit 6 of Huperzia lucidula (Shining clubmoss).